The sequence spans 127 residues: Fluoride-specific ion channel FluC 1 (127 aa).

Helical transmembrane passes span 4–24 (TLLA…LVSL), 35–55 (VGTL…LALF), 71–91 (TGFC…VYLI), and 101–121 (GTIL…FILV). 2 residues coordinate Na(+): Gly-75 and Thr-78.

Belongs to the fluoride channel Fluc/FEX (TC 1.A.43) family.

The protein localises to the cell inner membrane. The enzyme catalyses fluoride(in) = fluoride(out). With respect to regulation, na(+) is not transported, but it plays an essential structural role and its presence is essential for fluoride channel function. Its function is as follows. Fluoride-specific ion channel. Important for reducing fluoride concentration in the cell, thus reducing its toxicity. This chain is Fluoride-specific ion channel FluC 1, found in Yersinia pseudotuberculosis serotype I (strain IP32953).